The sequence spans 104 residues: Co-chaperonin GroES 5 (104 aa).

Belongs to the GroES chaperonin family. As to quaternary structure, heptamer of 7 subunits arranged in a ring. Interacts with the chaperonin GroEL.

It localises to the cytoplasm. Functionally, together with the chaperonin GroEL, plays an essential role in assisting protein folding. The GroEL-GroES system forms a nano-cage that allows encapsulation of the non-native substrate proteins and provides a physical environment optimized to promote and accelerate protein folding. GroES binds to the apical surface of the GroEL ring, thereby capping the opening of the GroEL channel. The protein is Co-chaperonin GroES 5 of Rhizobium meliloti (strain 1021) (Ensifer meliloti).